Consider the following 885-residue polypeptide: Alanine--tRNA ligase (885 aa).

Residues H564, H568, C676, and H680 each contribute to the Zn(2+) site.

The protein belongs to the class-II aminoacyl-tRNA synthetase family. The cofactor is Zn(2+).

It is found in the cytoplasm. The enzyme catalyses tRNA(Ala) + L-alanine + ATP = L-alanyl-tRNA(Ala) + AMP + diphosphate. Functionally, catalyzes the attachment of alanine to tRNA(Ala) in a two-step reaction: alanine is first activated by ATP to form Ala-AMP and then transferred to the acceptor end of tRNA(Ala). Also edits incorrectly charged Ser-tRNA(Ala) and Gly-tRNA(Ala) via its editing domain. This Brucella anthropi (strain ATCC 49188 / DSM 6882 / CCUG 24695 / JCM 21032 / LMG 3331 / NBRC 15819 / NCTC 12168 / Alc 37) (Ochrobactrum anthropi) protein is Alanine--tRNA ligase.